The following is a 458-amino-acid chain: tRNA modification GTPase MnmE (458 aa).

Positions 26, 88, and 127 each coordinate (6S)-5-formyl-5,6,7,8-tetrahydrofolate. In terms of domain architecture, TrmE-type G spans Gly224–Phe378. Asn234 contacts K(+). Residues Asn234–Ser239, Thr253–Thr259, and Asp278–Gly281 each bind GTP. Mg(2+) is bound at residue Ser238. Thr253, Ile255, and Thr258 together coordinate K(+). Thr259 is a Mg(2+) binding site. Lys458 contributes to the (6S)-5-formyl-5,6,7,8-tetrahydrofolate binding site.

Belongs to the TRAFAC class TrmE-Era-EngA-EngB-Septin-like GTPase superfamily. TrmE GTPase family. In terms of assembly, homodimer. Heterotetramer of two MnmE and two MnmG subunits. It depends on K(+) as a cofactor.

The protein resides in the cytoplasm. Its function is as follows. Exhibits a very high intrinsic GTPase hydrolysis rate. Involved in the addition of a carboxymethylaminomethyl (cmnm) group at the wobble position (U34) of certain tRNAs, forming tRNA-cmnm(5)s(2)U34. This is tRNA modification GTPase MnmE from Streptococcus agalactiae serotype Ia (strain ATCC 27591 / A909 / CDC SS700).